Here is a 798-residue protein sequence, read N- to C-terminus: Cold shock domain-containing protein E1 (798 aa).

M1 bears the N-acetylmethionine mark. The region spanning 26–87 (ETGVIEKLLT…RTGKPIAVKL (62 aa)) is the CSD 1 domain. At K81 the chain carries N6-acetyllysine. K91 is covalently cross-linked (Glycyl lysine isopeptide (Lys-Gly) (interchain with G-Cter in SUMO2)). At S123 the chain carries Phosphoserine. The region spanning 136 to 179 (VFYLTYTPEDVEGNVQLETGDKINFVIDNNKHTGAVSARNIMLL) is the CSD 2; truncated domain. The CSD 3 domain maps to 186–245 (CQGVVCAMKEAFGFIERGDVVKEIFFHYSEFKGDLETLQPGDDVEFTIKDRNGKEVATDV). A Phosphoserine modification is found at S276. The CSD 4; truncated domain occupies 297–337 (LPFGDKDTKSKVTLLEGDHVRFNISTDRRDKLERATNIEVL). CSD domains are found at residues 349-410 (EMGV…AIRI) and 447-507 (NKGK…ATCV). Residue S514 is modified to Phosphoserine. In terms of domain architecture, CSD 7 spans 519 to 579 (LLGYVATLKD…KGNKVSAEKV (61 aa)). S584 bears the Phosphoserine mark. 2 consecutive CSD domains span residues 610–670 (PTQT…AYNI) and 674–735 (RRAT…ACNV). The SUZ-C domain occupies 748 to 789 (PRPDRLVNRLKNITLDDASAPRLMVLRQPRGPDNSMGFGAER). T761 is modified (phosphothreonine).

Belongs to the UNR family. Component of a multi subunit autoregulatory ribonucleoprotein complex (ARC), at least composed of IGF2BP1, PABPC1 and CSDE1. Interacts with STRAP. Part of a complex associated with the FOS mCRD domain and consisting of PABPC1, PAIP1, HNRPD and SYNCRIP. The interaction with PABPC1 is direct and RNA-independent. Interacts with EIF4ENIF1/4E-T.

Its subcellular location is the cytoplasm. The protein resides in the stress granule. It localises to the P-body. Its function is as follows. RNA-binding protein involved in translationally coupled mRNA turnover. Implicated with other RNA-binding proteins in the cytoplasmic deadenylation/translational and decay interplay of the FOS mRNA mediated by the major coding-region determinant of instability (mCRD) domain. Required for efficient formation of stress granules. Functionally, (Microbial infection) Required for internal initiation of translation of human rhinovirus RNA. The protein is Cold shock domain-containing protein E1 of Homo sapiens (Human).